A 405-amino-acid chain; its full sequence is Transcriptional regulatory protein DEP1 (405 aa).

Over residues 1–12 the composition is skewed to low complexity; it reads MSQQTPQESEQT. Disordered regions lie at residues 1-26 and 49-171; these read MSQQTPQESEQTTAKEQDLDQESVLS and AGTE…VMPS. S56 carries the post-translational modification Phosphoserine. Composition is skewed to basic and acidic residues over residues 86–108 and 116–139; these read SLKRPHEDEKEAIDEAKKMKVPG and EEEKSQELEEAIDSKEKSTDARDE. S120 bears the Phosphoserine mark. Positions 140–157 are enriched in acidic residues; that stretch reads QGDEGDNEEENNEEDNEN. A Phosphoserine modification is found at S370.

Component of the RPD3C(L) complex composed of at least ASH1, CTI6, DEP1, PHO23, RPD3, RXT2, RXT3, SAP30, SDS3, SIN3, UME1 and UME6.

Its subcellular location is the cytoplasm. It localises to the nucleus. Its function is as follows. Component of the RPD3C(L) histone deacetylase complex (HDAC) responsible for the deacetylation of lysine residues on the N-terminal part of the core histones (H2A, H2B, H3 and H4). Histone deacetylation gives a tag for epigenetic repression and plays an important role in transcriptional regulation, cell cycle progression and developmental events. In Saccharomyces cerevisiae (strain ATCC 204508 / S288c) (Baker's yeast), this protein is Transcriptional regulatory protein DEP1 (DEP1).